We begin with the raw amino-acid sequence, 418 residues long: Putative competence-damage inducible protein (418 aa).

Belongs to the CinA family.

The polypeptide is Putative competence-damage inducible protein (Streptococcus gordonii (strain Challis / ATCC 35105 / BCRC 15272 / CH1 / DL1 / V288)).